A 427-amino-acid chain; its full sequence is Histidinol dehydrogenase (427 aa).

Positions 232, 254, and 257 each coordinate substrate. Residues glutamine 254 and histidine 257 each contribute to the Zn(2+) site. Catalysis depends on proton acceptor residues glutamate 322 and histidine 323. Substrate contacts are provided by histidine 323, aspartate 356, glutamate 410, and histidine 415. Aspartate 356 contributes to the Zn(2+) binding site. Zn(2+) is bound at residue histidine 415.

The protein belongs to the histidinol dehydrogenase family. It depends on Zn(2+) as a cofactor.

The enzyme catalyses L-histidinol + 2 NAD(+) + H2O = L-histidine + 2 NADH + 3 H(+). It participates in amino-acid biosynthesis; L-histidine biosynthesis; L-histidine from 5-phospho-alpha-D-ribose 1-diphosphate: step 9/9. Catalyzes the sequential NAD-dependent oxidations of L-histidinol to L-histidinaldehyde and then to L-histidine. This is Histidinol dehydrogenase from Listeria monocytogenes serotype 4b (strain F2365).